The chain runs to 153 residues: Succinate dehydrogenase assembly factor 2, mitochondrial (153 aa).

The protein belongs to the SDHAF2 family. In terms of assembly, interacts with the flavoprotein subunit within the SDH catalytic dimer.

Its subcellular location is the mitochondrion matrix. Plays an essential role in the assembly of succinate dehydrogenase (SDH), an enzyme complex (also referred to as respiratory complex II) that is a component of both the tricarboxylic acid (TCA) cycle and the mitochondrial electron transport chain, and which couples the oxidation of succinate to fumarate with the reduction of ubiquinone (coenzyme Q) to ubiquinol. Required for flavinylation (covalent attachment of FAD) of the flavoprotein subunit of the SDH catalytic dimer. This Candida glabrata (strain ATCC 2001 / BCRC 20586 / JCM 3761 / NBRC 0622 / NRRL Y-65 / CBS 138) (Yeast) protein is Succinate dehydrogenase assembly factor 2, mitochondrial.